The chain runs to 244 residues: uncharacterized protein (244 aa).

The signal sequence occupies residues 1–19 (MRGIFFLILILNFIGLIFS). 2 N-linked (GlcNAc...) asparagine glycosylation sites follow: Asn-45 and Asn-77. ShKT domains lie at 67–105 (CNNP…CGKC) and 113–149 (CSDK…CNRC). 3 cysteine pairs are disulfide-bonded: Cys-113-Cys-149, Cys-122-Cys-142, and Cys-129-Cys-146. Residues Asn-152 and Asn-158 are each glycosylated (N-linked (GlcNAc...) asparagine). 2 consecutive ShKT domains span residues 171–205 (CTDL…CNAC) and 208–243 (CEDA…CNIC). Disulfide bonds link Cys-171–Cys-205, Cys-178–Cys-198, Cys-185–Cys-202, Cys-208–Cys-243, Cys-215–Cys-236, and Cys-224–Cys-240.

This is an uncharacterized protein from Caenorhabditis elegans.